Reading from the N-terminus, the 289-residue chain is Elongation factor Ts (289 aa).

The segment at 82–85 (TDFV) is involved in Mg(2+) ion dislocation from EF-Tu.

Belongs to the EF-Ts family.

Its subcellular location is the cytoplasm. Its function is as follows. Associates with the EF-Tu.GDP complex and induces the exchange of GDP to GTP. It remains bound to the aminoacyl-tRNA.EF-Tu.GTP complex up to the GTP hydrolysis stage on the ribosome. The chain is Elongation factor Ts from Chloroherpeton thalassium (strain ATCC 35110 / GB-78).